The following is a 628-amino-acid chain: LRR receptor kinase SERK2 (628 aa).

The N-terminal stretch at 1–31 is a signal peptide; that stretch reads MAEARLLRRRRLCLAVPFVWVVAVAVSRVGA. 4 LRR repeats span residues 97-121, 123-144, 145-169, and 170-194; these read LKNLQYLELYSNNISGTIPNELGNL, NLVSLDLYLNNFTGFIPETLGQ, LYKLRFLRLNNNSLSGSIPKSLTNI, and TTLQVLDLSNNNLSGEVPSTGSFSL. Residues Asn109, Asn120, Asn133, Asn155, Asn168, and Asn181 are each glycosylated (N-linked (GlcNAc...) asparagine). A helical membrane pass occupies residues 243 to 263; sequence AIAGGVAAAAALLFAVPAIGF. Residue Thr303 is modified to Phosphothreonine. In terms of domain architecture, Protein kinase spans 306 to 593; sequence FSNKNILGRG…GLAERWEEWQ (288 aa). Position 312-320 (312-320) interacts with ATP; it reads LGRGGFGKV. Ser329 is modified (phosphoserine). Residue Lys334 participates in ATP binding. Thr350 carries the phosphothreonine modification. Residues Ser356 and Ser387 each carry the phosphoserine modification. Residue Asp433 is the Proton acceptor of the active site. Phosphothreonine is present on residues Thr463, Thr466, and Thr472. Phosphoserine is present on Ser615. Thr616 is modified (phosphothreonine). Ser625 bears the Phosphoserine mark.

Belongs to the protein kinase superfamily. Ser/Thr protein kinase family. In terms of assembly, interacts with BRI1. Interacts with XA21, XA26/XA3 and FLS2. Post-translationally, autophosphorylated on serine and threonine residues. Expressed in flag leaves. Expressed in roots, shoot apex, leaf blades, leaf sheaths, panicles and flowers. Expressed leaves, stems, sheaths and flowers.

The protein resides in the cell membrane. The enzyme catalyses L-seryl-[protein] + ATP = O-phospho-L-seryl-[protein] + ADP + H(+). It carries out the reaction L-threonyl-[protein] + ATP = O-phospho-L-threonyl-[protein] + ADP + H(+). Functionally, LRR receptor kinase involved in positive regulation of somatic embryogenesis and defense response against the rice blast fungus pathogen Magnaporthe oryzae. Involved in the positive regulation of receptor kinase-mediated immunity. Required for immunity mediated by the LRR receptor kinases XA21 and XA26/XA3 which recognize effectors from the bacterial pathogen Xanthomonas oryzae pv. oryzae (Xoo). Required for the immune response mediated by the LRR receptor kinase FLS2 which recognizes specifically the bacterial flagellin (flg22) effector. Kinase activity and direct interaction with the immune receptors is critical for their function. Involved in the regulation of plant growth through the brassinosteroid (BR) signaling pathway. The chain is LRR receptor kinase SERK2 from Oryza sativa subsp. japonica (Rice).